The following is a 367-amino-acid chain: 3-dehydroquinate synthase (367 aa).

NAD(+)-binding positions include 69-74 (DGEAFK), 103-107 (GVIGD), 127-128 (TT), Lys140, and Lys149. Positions 182, 245, and 262 each coordinate Zn(2+).

This sequence belongs to the sugar phosphate cyclases superfamily. Dehydroquinate synthase family. The cofactor is Co(2+). Requires Zn(2+) as cofactor. It depends on NAD(+) as a cofactor.

The protein localises to the cytoplasm. It carries out the reaction 7-phospho-2-dehydro-3-deoxy-D-arabino-heptonate = 3-dehydroquinate + phosphate. The protein operates within metabolic intermediate biosynthesis; chorismate biosynthesis; chorismate from D-erythrose 4-phosphate and phosphoenolpyruvate: step 2/7. Catalyzes the conversion of 3-deoxy-D-arabino-heptulosonate 7-phosphate (DAHP) to dehydroquinate (DHQ). This is 3-dehydroquinate synthase from Pseudomonas savastanoi pv. phaseolicola (strain 1448A / Race 6) (Pseudomonas syringae pv. phaseolicola (strain 1448A / Race 6)).